The primary structure comprises 288 residues: ATP synthase gamma chain (288 aa).

This sequence belongs to the ATPase gamma chain family. As to quaternary structure, F-type ATPases have 2 components, CF(1) - the catalytic core - and CF(0) - the membrane proton channel. CF(1) has five subunits: alpha(3), beta(3), gamma(1), delta(1), epsilon(1). CF(0) has three main subunits: a, b and c.

It is found in the cell inner membrane. Functionally, produces ATP from ADP in the presence of a proton gradient across the membrane. The gamma chain is believed to be important in regulating ATPase activity and the flow of protons through the CF(0) complex. This Rickettsia bellii (strain RML369-C) protein is ATP synthase gamma chain.